Reading from the N-terminus, the 345-residue chain is L-threonine 3-dehydrogenase (345 aa).

C42 is a binding site for Zn(2+). Active-site charge relay system residues include T44 and H47. Zn(2+) is bound by residues H67, E68, C97, C100, C103, and C111. NAD(+) contacts are provided by residues I179, D199, R204, 266–268, and 290–291; these read LGI and IY.

This sequence belongs to the zinc-containing alcohol dehydrogenase family. In terms of assembly, homotetramer. Zn(2+) serves as cofactor.

The protein resides in the cytoplasm. It catalyses the reaction L-threonine + NAD(+) = (2S)-2-amino-3-oxobutanoate + NADH + H(+). It functions in the pathway amino-acid degradation; L-threonine degradation via oxydo-reductase pathway; glycine from L-threonine: step 1/2. Its function is as follows. Catalyzes the NAD(+)-dependent oxidation of L-threonine to 2-amino-3-ketobutyrate. This Sinorhizobium fredii (strain NBRC 101917 / NGR234) protein is L-threonine 3-dehydrogenase.